We begin with the raw amino-acid sequence, 259 residues long: Probable ABC transporter permease protein RP096 (259 aa).

Transmembrane regions (helical) follow at residues 13–35 (TIKF…SSII), 49–69 (LFIG…SGAV), 148–168 (VIAA…IGVM), 195–215 (PIDV…ISII), and 237–257 (AVVN…ELFF).

It belongs to the MlaE permease family.

It is found in the cell inner membrane. Its function is as follows. Could be part of an ABC transporter complex. The sequence is that of Probable ABC transporter permease protein RP096 from Rickettsia prowazekii (strain Madrid E).